We begin with the raw amino-acid sequence, 388 residues long: Nesprin-4 (388 aa).

Residues M1–P339 lie on the Cytoplasmic side of the membrane. Positions E60 to D92 are disordered. Residues S78–D92 are compositionally biased toward basic and acidic residues. The region spanning V331–I388 is the KASH domain. A helical; Anchor for type IV membrane protein transmembrane segment spans residues L340–L360. The Perinuclear space portion of the chain corresponds to S361–I388.

The protein belongs to the nesprin family. In terms of assembly, core component of LINC complexes which are composed of inner nuclear membrane SUN domain-containing proteins coupled to outer nuclear membrane KASH domain-containing nesprins. SUN and KASH domain-containing proteins seem to bind each other promiscuously; however, differentially expression of LINC complex constituents can give rise to specific assemblies. Probably part of a SUN1-containing LINC complex. Interacts with kinesins KIF5B and KLC1. In terms of processing, the disulfid bond with SUN1 or SUN2 is required for stability of the respective LINC complex under tensile forces. Expressed in secretory epithelial cells, such as those found in exocrine pancreas, bulbourethral gland, mammary gland and salivary gland (at protein level). Also expressed in the cochlea, where it is restricted primarily to the 3 rows of outer hair cells and 1 row of inner hair cells (at protein level). Not detected in other cells of the cochlea, including Deiter's cells and pillar cells, nor in liver and kidney (at protein level).

It localises to the nucleus outer membrane. In terms of biological role, as a component of the LINC (LInker of Nucleoskeleton and Cytoskeleton) complex, involved in the connection between the nuclear lamina and the cytoskeleton. The nucleocytoplasmic interactions established by the LINC complex play an important role in the transmission of mechanical forces across the nuclear envelope and in nuclear movement and positioning. Behaves as a kinesin cargo, providing a functional binding site for kinesin-1 at the nuclear envelope. Hence may contribute to the establishment of secretory epithelial morphology, by promoting kinesin-dependent apical migration of the centrosome and Golgi apparatus and basal localization of the nucleus. The protein is Nesprin-4 (Syne4) of Mus musculus (Mouse).